The primary structure comprises 114 residues: Large ribosomal subunit protein bL20c (114 aa).

This sequence belongs to the bacterial ribosomal protein bL20 family.

It is found in the plastid. The protein resides in the cyanelle. Functionally, binds directly to 23S ribosomal RNA and is necessary for the in vitro assembly process of the 50S ribosomal subunit. It is not involved in the protein synthesizing functions of that subunit. This chain is Large ribosomal subunit protein bL20c (rpl20), found in Cyanophora paradoxa.